The chain runs to 175 residues: Co-chaperone protein HscB homolog (175 aa).

Positions 2–74 constitute a J domain; that stretch reads NYFQLFNIEV…LQRAEYILVQ (73 aa).

The protein belongs to the HscB family. As to quaternary structure, interacts with HscA and stimulates its ATPase activity.

Co-chaperone involved in the maturation of iron-sulfur cluster-containing proteins. Seems to help targeting proteins to be folded toward HscA. This chain is Co-chaperone protein HscB homolog, found in Colwellia psychrerythraea (strain 34H / ATCC BAA-681) (Vibrio psychroerythus).